Consider the following 603-residue polypeptide: Penicillin-binding protein activator LpoA (603 aa).

The first 26 residues, methionine 1–alanine 26, serve as a signal peptide directing secretion. Cysteine 27 carries N-palmitoyl cysteine lipidation. Residue cysteine 27 is the site of S-diacylglycerol cysteine attachment.

The protein belongs to the LpoA family. In terms of assembly, interacts with PBP1a.

Its subcellular location is the cell outer membrane. In terms of biological role, regulator of peptidoglycan synthesis that is essential for the function of penicillin-binding protein 1A (PBP1a). This Vibrio cholerae serotype O1 (strain ATCC 39541 / Classical Ogawa 395 / O395) protein is Penicillin-binding protein activator LpoA.